Consider the following 252-residue polypeptide: Cell division protein ZapD (252 aa).

Belongs to the ZapD family. Interacts with FtsZ.

The protein resides in the cytoplasm. Functionally, cell division factor that enhances FtsZ-ring assembly. Directly interacts with FtsZ and promotes bundling of FtsZ protofilaments, with a reduction in FtsZ GTPase activity. The sequence is that of Cell division protein ZapD from Dechloromonas aromatica (strain RCB).